A 278-amino-acid chain; its full sequence is Small ribosomal subunit biogenesis GTPase RsgA (278 aa).

The CP-type G domain occupies 62-218 (KNELTRPRVA…ICDTPGFNVI (157 aa)). Residues 112–115 (TKTD) and 162–170 (GQSGVGKSS) contribute to the GTP site. 4 residues coordinate Zn(2+): cysteine 241, cysteine 246, histidine 248, and cysteine 254.

It belongs to the TRAFAC class YlqF/YawG GTPase family. RsgA subfamily. As to quaternary structure, monomer. Associates with 30S ribosomal subunit, binds 16S rRNA. The cofactor is Zn(2+).

It is found in the cytoplasm. Functionally, one of several proteins that assist in the late maturation steps of the functional core of the 30S ribosomal subunit. Helps release RbfA from mature subunits. May play a role in the assembly of ribosomal proteins into the subunit. Circularly permuted GTPase that catalyzes slow GTP hydrolysis, GTPase activity is stimulated by the 30S ribosomal subunit. This Mycoplasma genitalium (strain ATCC 33530 / DSM 19775 / NCTC 10195 / G37) (Mycoplasmoides genitalium) protein is Small ribosomal subunit biogenesis GTPase RsgA.